Reading from the N-terminus, the 1496-residue chain is Chromosome partition protein MukB (1496 aa).

An ATP-binding site is contributed by 63-70 (GGNGAGKS). 5 coiled-coil regions span residues 328–493 (KLEL…QRLS), 536–632 (KMQA…APAW), 808–832 (RAAR…HAER), 861–1171 (NPEE…SAEE), and 1235–1291 (IDAI…LQNI). The tract at residues 694–811 (PDGSDDVRLN…EVPLFGRAAR (118 aa)) is flexible hinge. A compositionally biased stretch (basic and acidic residues) spans 1082–1091 (RARSRRDELQ). The tract at residues 1082-1101 (RARSRRDELQQRLSQQRSRK) is disordered.

Belongs to the SMC family. MukB subfamily. As to quaternary structure, homodimerization via its hinge domain. Binds to DNA via its C-terminal region. Interacts, and probably forms a ternary complex, with MukE and MukF via its C-terminal region. The complex formation is stimulated by calcium or magnesium. Interacts with tubulin-related protein FtsZ.

The protein resides in the cytoplasm. The protein localises to the nucleoid. Its function is as follows. Plays a central role in chromosome condensation, segregation and cell cycle progression. Functions as a homodimer, which is essential for chromosome partition. Involved in negative DNA supercoiling in vivo, and by this means organize and compact chromosomes. May achieve or facilitate chromosome segregation by condensation DNA from both sides of a centrally located replisome during cell division. This is Chromosome partition protein MukB from Actinobacillus pleuropneumoniae serotype 5b (strain L20).